We begin with the raw amino-acid sequence, 176 residues long: tRNA (adenine(37)-N6)-methyltransferase (176 aa).

A TsaA-like domain is found at 1 to 94 (SFSHIWVQFV…YLPFVEAQPD (94 aa)). S-adenosyl-L-methionine-binding positions include His-12, 12–13 (HG), Arg-40, Leu-50, and 74–77 (LDGT).

This sequence belongs to the tRNA methyltransferase O family.

It catalyses the reaction N(6)-L-threonylcarbamoyladenosine(37) in tRNA + S-adenosyl-L-methionine = N(6)-methyl,N(6)-L-threonylcarbamoyladenosine(37) in tRNA + S-adenosyl-L-homocysteine + H(+). S-adenosyl-L-methionine-dependent methyltransferase responsible for the addition of the methyl group in the formation of N6-methyl-N6-threonylcarbamoyladenosine at position 37 (m(6)t(6)A37) of the tRNA anticodon loop of tRNA(Thr)(GGU). The methyl group of m(6)t(6)A37 appears to slightly improve the efficiency of the tRNA decoding ability. Binds to tRNA. The sequence is that of tRNA (adenine(37)-N6)-methyltransferase from Eikenella corrodens.